The sequence spans 479 residues: G-rich sequence factor 1 (479 aa).

A mitochondrion-targeting transit peptide spans 1–116; the sequence is MAGTRWVLGA…AAAAGPARGY (116 aa). 2 consecutive RRM domains span residues 149 to 245 and 249 to 325; these read YLIR…PSPV and GVVR…PSRR. A Phosphoserine modification is found at serine 243. Phosphoserine is present on serine 334. The RRM 3 domain occupies 400 to 479; sequence HFVHMRGLPF…LFLNSCPKGK (80 aa).

As to quaternary structure, monomer. Found in a complex with DDX28, DHX30, FASTKD2 and FASTKD5. Interacts with the mitochondrial RNase P complex subunit TRMT10C/MRPP1. Interacts with the 2 components of the mitochondrial degradosome complex, PNPT1 and SUPV3L1, in an RNA-dependent manner.

It localises to the mitochondrion matrix. In terms of biological role, regulator of post-transcriptional mitochondrial gene expression, required for assembly of the mitochondrial ribosome and for recruitment of mRNA and lncRNA. Binds RNAs containing the 14 base G-rich element. Preferentially binds RNAs transcribed from three contiguous genes on the light strand of mtDNA, the ND6 mRNA, and the long non-coding RNAs for MT-CYB and MT-ND5, each of which contains multiple consensus binding sequences. Involved in the degradosome-mediated decay of non-coding mitochondrial transcripts (MT-ncRNA) and tRNA-like molecules. Acts by unwinding G-quadruplex RNA structures in MT-ncRNA, thus facilitating their degradation by the degradosome. G-quadruplexes (G4) are non-canonical 4 stranded structures formed by transcripts from the light strand of mtDNA. The protein is G-rich sequence factor 1 (Grsf1) of Mus musculus (Mouse).